Consider the following 204-residue polypeptide: FMN-dependent NADH:quinone oxidoreductase (204 aa).

Residues serine 10, serine 16–serine 18, and methionine 96–phenylalanine 99 contribute to the FMN site.

This sequence belongs to the azoreductase type 1 family. Homodimer. The cofactor is FMN.

It catalyses the reaction 2 a quinone + NADH + H(+) = 2 a 1,4-benzosemiquinone + NAD(+). It carries out the reaction N,N-dimethyl-1,4-phenylenediamine + anthranilate + 2 NAD(+) = 2-(4-dimethylaminophenyl)diazenylbenzoate + 2 NADH + 2 H(+). Its function is as follows. Quinone reductase that provides resistance to thiol-specific stress caused by electrophilic quinones. Functionally, also exhibits azoreductase activity. Catalyzes the reductive cleavage of the azo bond in aromatic azo compounds to the corresponding amines. In Herminiimonas arsenicoxydans, this protein is FMN-dependent NADH:quinone oxidoreductase.